Reading from the N-terminus, the 114-residue chain is Histone H3-5 (114 aa).

The tract at residues 1 to 29 (NTGAKAPRKQLANKAARKSTNVNAVSGVK) is disordered.

Belongs to the histone H3 family. The nucleosome is a histone octamer containing two molecules each of H2A, H2B, H3 and H4 assembled in one H3-H4 heterotetramer and two H2A-H2B heterodimers. The octamer wraps approximately 147 bp of DNA.

It is found in the nucleus. It localises to the chromosome. Core component of nucleosome. Nucleosomes wrap and compact DNA into chromatin, limiting DNA accessibility to the cellular machineries which require DNA as a template. Histones thereby play a central role in transcription regulation, DNA repair, DNA replication and chromosomal stability. DNA accessibility is regulated via a complex set of post-translational modifications of histones, also called histone code, and nucleosome remodeling. This Stylonychia lemnae (Ciliate) protein is Histone H3-5 (H3-5).